Consider the following 224-residue polypeptide: Flagellar L-ring protein (224 aa).

Residues 1–15 form the signal peptide; it reads MLRYLMVGSLLVLAG. The N-palmitoyl cysteine moiety is linked to residue Cys16. Cys16 carries S-diacylglycerol cysteine lipidation.

This sequence belongs to the FlgH family. As to quaternary structure, the basal body constitutes a major portion of the flagellar organelle and consists of four rings (L,P,S, and M) mounted on a central rod.

It is found in the cell outer membrane. The protein resides in the bacterial flagellum basal body. Its function is as follows. Assembles around the rod to form the L-ring and probably protects the motor/basal body from shearing forces during rotation. The chain is Flagellar L-ring protein from Shewanella amazonensis (strain ATCC BAA-1098 / SB2B).